Here is a 222-residue protein sequence, read N- to C-terminus: Ribonuclease T (222 aa).

Residues 20–194 (VVIDVETAGF…YDTERTAELF (175 aa)) form the Exonuclease domain. Mg(2+) contacts are provided by Asp-23, Glu-25, His-181, and Asp-186. His-181 functions as the Proton donor/acceptor in the catalytic mechanism.

The protein belongs to the RNase T family. In terms of assembly, homodimer. It depends on Mg(2+) as a cofactor.

In terms of biological role, trims short 3' overhangs of a variety of RNA species, leaving a one or two nucleotide 3' overhang. Responsible for the end-turnover of tRNA: specifically removes the terminal AMP residue from uncharged tRNA (tRNA-C-C-A). Also appears to be involved in tRNA biosynthesis. The protein is Ribonuclease T of Shewanella sp. (strain MR-4).